Reading from the N-terminus, the 254-residue chain is MASPREENVYMANVAARAERYEEMVEFMEKVVAALDTELTVEERNLLSVAYKNVIGARRASWRIISSIEQKEESRGNEDHVASIKKYRSQIENELTSICNGILKLLDSKLIGSAATGDSKVFYLKMKGDYYRYLAEFKTGTERKEAAENTLSAYKSAQDIANGELAPTHPIRLGLALNFSVFYYEILNSPDRACNLAKQAFDEAIADVDTLGEESYKDSTLIMQLLRDNLTLWTSDMQDDGADEIKEPSKADNE.

It belongs to the 14-3-3 family.

The sequence is that of 14-3-3-like protein RA215 from Solanum tuberosum (Potato).